The following is a 202-amino-acid chain: Peroxynitrite isomerase (202 aa).

The GXWXGXG motif lies at 21 to 27 (GEWEGRG). His-193 serves as a coordination point for heme b.

This sequence belongs to the nitrobindin family. Homodimer. Requires heme b as cofactor.

It catalyses the reaction peroxynitrite = nitrate. It functions in the pathway nitrogen metabolism. In terms of biological role, heme-binding protein able to scavenge peroxynitrite and to protect free L-tyrosine against peroxynitrite-mediated nitration, by acting as a peroxynitrite isomerase that converts peroxynitrite to nitrate. Therefore, this protein likely plays a role in peroxynitrite sensing and in the detoxification of reactive nitrogen and oxygen species (RNS and ROS, respectively). Is able to bind nitric oxide (NO) in vitro, but may act as a sensor of peroxynitrite levels in vivo. The polypeptide is Peroxynitrite isomerase (Pseudarthrobacter chlorophenolicus (strain ATCC 700700 / DSM 12829 / CIP 107037 / JCM 12360 / KCTC 9906 / NCIMB 13794 / A6) (Arthrobacter chlorophenolicus)).